We begin with the raw amino-acid sequence, 190 residues long: Threonylcarbamoyl-AMP synthase (190 aa).

Residues 7-190 enclose the YrdC-like domain; that stretch reads GDAIAAAIDV…ALTGELFRQG (184 aa).

The protein belongs to the SUA5 family. TsaC subfamily.

It is found in the cytoplasm. The catalysed reaction is L-threonine + hydrogencarbonate + ATP = L-threonylcarbamoyladenylate + diphosphate + H2O. Functionally, required for the formation of a threonylcarbamoyl group on adenosine at position 37 (t(6)A37) in tRNAs that read codons beginning with adenine. Catalyzes the conversion of L-threonine, HCO(3)(-)/CO(2) and ATP to give threonylcarbamoyl-AMP (TC-AMP) as the acyladenylate intermediate, with the release of diphosphate. In Escherichia coli O157:H7, this protein is Threonylcarbamoyl-AMP synthase.